Reading from the N-terminus, the 169-residue chain is Ubiquitin-fold modifier-conjugating enzyme 1 (169 aa).

Residue Cys-116 is the Glycyl thioester intermediate of the active site.

Belongs to the ubiquitin-conjugating enzyme family. UFC1 subfamily.

E2-like enzyme which forms an intermediate with UFM1 via a thioester linkage. The chain is Ubiquitin-fold modifier-conjugating enzyme 1 from Branchiostoma floridae (Florida lancelet).